We begin with the raw amino-acid sequence, 479 residues long: Solute carrier family 46 member 2 (479 aa).

Topologically, residues 1-23 (MGPGGTCPWSSRLSGFRVRTWIE) are cytoplasmic. The helical transmembrane segment at 24–44 (PVVASTQVAGSLYDAGLLLVV) threads the bilayer. Topologically, residues 45-80 (KESFKSEAGGSSNYSANQSLVEYQEDQQQKAISNFN) are extracellular. 2 N-linked (GlcNAc...) asparagine glycosylation sites follow: Asn-57 and Asn-61. Residues 81–101 (IIYNLVLGLTPLLSAYGLGWL) traverse the membrane as a helical segment. Over 102–110 (SDRYHRKIS) the chain is Cytoplasmic. Residues 111-131 (ICTAMLGFLLSRIGLLLKVML) form a helical membrane-spanning segment. Topologically, residues 132-140 (DWPVEVMYG) are extracellular. Residues 141 to 161 (AAALNGLCGSFSAYWSGVMAL) traverse the membrane as a helical segment. The Cytoplasmic portion of the chain corresponds to 162–174 (GSLGCSEGRRSVR). The chain crosses the membrane as a helical span at residues 175 to 195 (LILIDLVLGLAGFSGSMASGH). Topologically, residues 196 to 207 (LFKQIVGHSAQG) are extracellular. The helical transmembrane segment at 208-228 (LLLTACSVGCAAFALFYSLFV) threads the bilayer. The Cytoplasmic portion of the chain corresponds to 229 to 281 (LKVPESKPNKVHPTVDTVSGMMGTYRTLDPDQQDKQNVPRNPRTPGKGKSSQR). The segment at 255 to 277 (TLDPDQQDKQNVPRNPRTPGKGK) is disordered. The chain crosses the membrane as a helical span at residues 282-302 (EVVALLFVGAIIYDLAAVGTV). Residues 303-321 (DVMALFVLKEPLHWNQVQL) are Extracellular-facing. The chain crosses the membrane as a helical span at residues 322–342 (GYGMASGYIIFITSFLGVLVF). Residues 343 to 348 (SRCFRD) are Cytoplasmic-facing. The helical transmembrane segment at 349–369 (TTMIIIGMLSFGSGALLLAFV) threads the bilayer. The Extracellular portion of the chain corresponds to 370–371 (KE). The helical transmembrane segment at 372 to 392 (TYMFYIARAIMLFALIPITTI) threads the bilayer. At 393 to 407 (RSAMSKLIKDSSYGK) the chain is on the cytoplasmic side. Residues 408–428 (IFVILQLCLTLTGVVTSTIYN) form a helical membrane-spanning segment. The Extracellular portion of the chain corresponds to 429–441 (KIYQLTLDKFIGT). The chain crosses the membrane as a helical span at residues 442-462 (CFVLSSFLSFLAIVPIGVVAY). At 463–479 (KQVPRSQQGECAEKQRS) the chain is on the cytoplasmic side.

It belongs to the major facilitator superfamily. SLC46A family. Post-translationally, glycosylated. In terms of tissue distribution, expressed on cortical epithelial cells in the thymus. Mainly expressed in the thymic cortex and is highly enriched in SCID thymus. Also expressed in lymph nodes, heart, fetal liver, brain, spleen, intestine and kidney, but not in adult liver, skin, skeletal muscle and lung. Expressed in skin epidermis.

The protein resides in the endosome membrane. It localises to the cell membrane. The catalysed reaction is N-acetyl-beta-D-glucosaminyl-(1-&gt;4)-1,6-anhydro-N-acetyl-beta-D-muramoyl-L-alanyl-gamma-D-glutamyl-meso-2,6-diaminopimeloyl-D-alanine(out) + n H(+)(out) = N-acetyl-beta-D-glucosaminyl-(1-&gt;4)-1,6-anhydro-N-acetyl-beta-D-muramoyl-L-alanyl-gamma-D-glutamyl-meso-2,6-diaminopimeloyl-D-alanine(in) + n H(+)(in). The enzyme catalyses L-alanyl-gamma-D-glutamyl-meso-2,6-diaminopimelate(out) + n H(+)(out) = L-alanyl-gamma-D-glutamyl-meso-2,6-diaminopimelate(in) + n H(+)(in). It catalyses the reaction N-acetyl-D-muramoyl-L-alanyl-D-isoglutamine(out) + n H(+)(out) = N-acetyl-D-muramoyl-L-alanyl-D-isoglutamine(in) + n H(+)(in). It carries out the reaction 2',3'-cGAMP(out) + n H(+)(out) = 2',3'-cGAMP(in) + n H(+)(in). The catalysed reaction is 3',3'-cGAMP(out) + n H(+)(out) = 3',3'-cGAMP(in) + n H(+)(in). Down-regulated by the anti-inflammatory drug methotrexate. In terms of biological role, proton-coupled transporter that delivers pathogen-associated or danger-associated molecular patterns to cytosolic pattern recognition receptors as part of the innate immune response to microbes or tissue injury. Has selectivity toward muropeptides that contain the amino acid diaminopimelic acid (DAP-type peptidoglycan muropeptides) including Tri-DAP and tracheal toxin (TCT), common in Gram-negative bacteria and Gram-positive bacilli. In the context of immune recognition of skin microbiota, shuttles bacterial muropeptides across the endolysosomal membranes into the cytosol for recognition by NOD1, triggering MYD88-dependent secretion of IL1A and neutrophil recruitment in a pyroptosis-type inflammatory process. To a lesser extent and redundantly, transports muramyl dipeptides derived from most bacterial proteoglycans, eliciting NOD2 receptor activation and downstream inflammatory responses. Postulated to function as an importer of cyclic GMP-AMP dinucleotides (cGAMPs) in monocyte and macrophage cell lineages. Selectively imports cGAMPs derived from pathogenic bacteria such as 3'3'-cGAMP thus providing for differential immune recognition of pathogenic versus commensal bacteria. During tumorigenesis may transport extracellular tumor-derived 2'3'-cGAMP across the plasma membrane of M1-polarized macrophages to activate the anti-tumoral stimulator of interferon genes (STING) pathway. The transport mechanism, its electrogenicity and stoichiometry remain to be elucidated. In Mus musculus (Mouse), this protein is Solute carrier family 46 member 2.